The following is a 608-amino-acid chain: Lysophospholipase 2 (608 aa).

Positions 1-17 are cleaved as a signal peptide; the sequence is MLVWQSILLFLVGCVLS. A PLA2c domain is found at 30-564; that stretch reads QCPEGKLTRS…ENYCWDGTIY (535 aa). 6 N-linked (GlcNAc...) asparagine glycosylation sites follow: N259, N365, N450, N464, N491, and N572.

This sequence belongs to the lysophospholipase family.

The protein localises to the secreted. The catalysed reaction is a 1-acyl-sn-glycero-3-phosphocholine + H2O = sn-glycerol 3-phosphocholine + a fatty acid + H(+). Its function is as follows. Catalyzes the release of fatty acids from lysophospholipids. Phospholipase B may well contribute to pathogenicity by abetting the fungus in damaging and traversing host cell membranes, processes which likely increase the rapidity of disseminated infection. This is Lysophospholipase 2 (PLB2) from Candida albicans (Yeast).